The chain runs to 193 residues: Adenylate kinase (193 aa).

11–16 (GAGKGT) is an ATP binding site. The NMP stretch occupies residues 31–60 (STGDLLRAEVKAQTPLGCQAKVYMDAGELV). Residues threonine 32, arginine 37, 58 to 60 (ELV), 85 to 88 (GFPR), and glutamine 92 contribute to the AMP site. An LID region spans residues 126 to 136 (ARGKEQGRSDD). An ATP-binding site is contributed by arginine 127. 2 residues coordinate AMP: arginine 133 and arginine 145. Glutamine 173 lines the ATP pocket.

It belongs to the adenylate kinase family. As to quaternary structure, monomer.

It is found in the cytoplasm. The catalysed reaction is AMP + ATP = 2 ADP. The protein operates within purine metabolism; AMP biosynthesis via salvage pathway; AMP from ADP: step 1/1. Functionally, catalyzes the reversible transfer of the terminal phosphate group between ATP and AMP. Plays an important role in cellular energy homeostasis and in adenine nucleotide metabolism. The chain is Adenylate kinase from Synechococcus sp. (strain JA-2-3B'a(2-13)) (Cyanobacteria bacterium Yellowstone B-Prime).